The following is a 417-amino-acid chain: Serine hydroxymethyltransferase (417 aa).

Residues leucine 121 and 125–127 each bind (6S)-5,6,7,8-tetrahydrofolate; that span reads GHL. An N6-(pyridoxal phosphate)lysine modification is found at lysine 229. Residue 355–357 coordinates (6S)-5,6,7,8-tetrahydrofolate; it reads SPF.

Belongs to the SHMT family. As to quaternary structure, homodimer. Pyridoxal 5'-phosphate serves as cofactor.

Its subcellular location is the cytoplasm. It carries out the reaction (6R)-5,10-methylene-5,6,7,8-tetrahydrofolate + glycine + H2O = (6S)-5,6,7,8-tetrahydrofolate + L-serine. It participates in one-carbon metabolism; tetrahydrofolate interconversion. The protein operates within amino-acid biosynthesis; glycine biosynthesis; glycine from L-serine: step 1/1. Catalyzes the reversible interconversion of serine and glycine with tetrahydrofolate (THF) serving as the one-carbon carrier. This reaction serves as the major source of one-carbon groups required for the biosynthesis of purines, thymidylate, methionine, and other important biomolecules. Also exhibits THF-independent aldolase activity toward beta-hydroxyamino acids, producing glycine and aldehydes, via a retro-aldol mechanism. In Shewanella amazonensis (strain ATCC BAA-1098 / SB2B), this protein is Serine hydroxymethyltransferase.